The chain runs to 411 residues: Adenylosuccinate synthetase (411 aa).

GTP is bound by residues 11 to 17 and 39 to 41; these read GDEGKGK and GHT. The active-site Proton acceptor is the Asp12. Positions 12 and 39 each coordinate Mg(2+). Residues 12–15, 37–40, Thr121, Arg135, Gln215, Thr230, and Arg294 each bind IMP; these read DEGK and NAGH. The active-site Proton donor is the His40. Position 290–296 (290–296) interacts with substrate; sequence TTTKRPR. GTP-binding positions include Arg296, 322 to 324, and 400 to 402; these read KLD and STS.

Belongs to the adenylosuccinate synthetase family. Homodimer. It depends on Mg(2+) as a cofactor.

Its subcellular location is the cytoplasm. The enzyme catalyses IMP + L-aspartate + GTP = N(6)-(1,2-dicarboxyethyl)-AMP + GDP + phosphate + 2 H(+). It functions in the pathway purine metabolism; AMP biosynthesis via de novo pathway; AMP from IMP: step 1/2. In terms of biological role, plays an important role in the de novo pathway of purine nucleotide biosynthesis. Catalyzes the first committed step in the biosynthesis of AMP from IMP. This chain is Adenylosuccinate synthetase, found in Helicobacter pylori (strain G27).